Consider the following 227-residue polypeptide: PKHD-type hydroxylase Veis_3084 (227 aa).

The tract at residues aspartate 27–glutamate 51 is disordered. Over residues alanine 33–proline 47 the composition is skewed to polar residues. The Fe2OG dioxygenase domain maps to arginine 78–serine 179. Histidine 97, aspartate 99, and histidine 160 together coordinate Fe cation. Arginine 170 contributes to the 2-oxoglutarate binding site.

The cofactor is Fe(2+). It depends on L-ascorbate as a cofactor.

In Verminephrobacter eiseniae (strain EF01-2), this protein is PKHD-type hydroxylase Veis_3084.